A 561-amino-acid polypeptide reads, in one-letter code: Formate--tetrahydrofolate ligase (561 aa).

70–77 (TPAGEGKT) serves as a coordination point for ATP.

This sequence belongs to the formate--tetrahydrofolate ligase family.

The catalysed reaction is (6S)-5,6,7,8-tetrahydrofolate + formate + ATP = (6R)-10-formyltetrahydrofolate + ADP + phosphate. It participates in one-carbon metabolism; tetrahydrofolate interconversion. This chain is Formate--tetrahydrofolate ligase, found in Pelagibacter ubique (strain HTCC1062).